The sequence spans 115 residues: Fluoride-specific ion channel FluC 4 (115 aa).

Transmembrane regions (helical) follow at residues 19–39 (WGTF…AGLG) and 42–62 (LGGI…LLGG). Positions 61 and 64 each coordinate Na(+). A helical membrane pass occupies residues 89 to 109 (IVASALLCVLAVAAGYGGIMW).

This sequence belongs to the fluoride channel Fluc/FEX (TC 1.A.43) family.

The protein resides in the cell inner membrane. The catalysed reaction is fluoride(in) = fluoride(out). Its activity is regulated as follows. Na(+) is not transported, but it plays an essential structural role and its presence is essential for fluoride channel function. Fluoride-specific ion channel. Important for reducing fluoride concentration in the cell, thus reducing its toxicity. The sequence is that of Fluoride-specific ion channel FluC 4 from Brucella melitensis biotype 1 (strain ATCC 23456 / CCUG 17765 / NCTC 10094 / 16M).